A 70-amino-acid chain; its full sequence is MASQCPVKNSWPELVGTNGDIAAGIIQTENANVKAIVVKEGLPITQDLNFNRVRVFVDENRVVTQVPAIG.

N-acetylalanine is present on A2. C5 carries the post-translational modification S-glutathionyl cysteine; alternate.

Belongs to the protease inhibitor I13 (potato type I serine protease inhibitor) family. As to quaternary structure, monomer and homodimer; disulfide-linked. Post-translationally, occurs in 3 forms that differ in the modification of Cys-5, HPI-1 forms a homodimer through a disulfide bond, HPI-2a is modified by glutathionylation, and HPI-2b is covalently modified by addition of an unidentified adduct but not by a disulfide linkage.

Its function is as follows. Inhibitor of serine proteases, strongly inhibits subtilisin A and weakly inhibits trypsin. Does not inhibit chymotrypsin, papain, pepsin, pronase E, protease type XIII and thermolysin. HPI-1 inhibits subtilisin A with an Ki of 0.21 nM. HPI-2a inhibits subtilisin A with an Ki of 0.08 nM. HPI-2b inhibits subtilisin A with an Ki of 0.1 nM. The protein is Protease inhibitor HPI of Hevea brasiliensis (Para rubber tree).